The sequence spans 202 residues: 3-isopropylmalate dehydratase small subunit (202 aa).

The protein belongs to the LeuD family. LeuD type 1 subfamily. In terms of assembly, heterodimer of LeuC and LeuD.

The enzyme catalyses (2R,3S)-3-isopropylmalate = (2S)-2-isopropylmalate. It participates in amino-acid biosynthesis; L-leucine biosynthesis; L-leucine from 3-methyl-2-oxobutanoate: step 2/4. Functionally, catalyzes the isomerization between 2-isopropylmalate and 3-isopropylmalate, via the formation of 2-isopropylmaleate. In Rhizobium etli (strain CIAT 652), this protein is 3-isopropylmalate dehydratase small subunit.